Reading from the N-terminus, the 521-residue chain is Cytochrome P450 1A1 (521 aa).

Phe-229 lines the substrate pocket. Residue Cys-463 participates in heme binding.

It belongs to the cytochrome P450 family. Heme serves as cofactor.

It localises to the endoplasmic reticulum membrane. The protein localises to the microsome membrane. The catalysed reaction is an organic molecule + reduced [NADPH--hemoprotein reductase] + O2 = an alcohol + oxidized [NADPH--hemoprotein reductase] + H2O + H(+). Functionally, cytochromes P450 are a group of heme-thiolate monooxygenases. They oxidize a variety of structurally unrelated compounds, including steroids, fatty acids, and xenobiotics. The protein is Cytochrome P450 1A1 (cyp1a1) of Opsanus tau (Oyster toadfish).